The primary structure comprises 253 residues: MNERDMSLMDHIAELRRRILIIVVFFVIALVVGFFLATPMITYLQGAPTAQDLPMNAFKLTDPLRVYMTFAFTSAFILVFPIILYQLWAFVSPGLHENERKATLAYIPIAFFLFLGGLSFAYFILFPFLIQFIGGLAERLHINELYGINEYFTFLFQITMPFGVLFQLPVVVMFLTRLGIVTPEFLRSVRKYAFFVLLVVAGFITPPELISHLMVTVPLLLLYEFSIWVSHLTYRKVQKLEKLRQEEYRQEEG.

A run of 5 helical transmembrane segments spans residues 19–39 (ILII…LATP), 70–90 (FAFT…LWAF), 109–129 (IAFF…FPFL), 154–174 (FLFQ…VVMF), and 194–214 (FFVL…SHLM).

Belongs to the TatC family. Forms a complex with TatA.

The protein localises to the cell membrane. In terms of biological role, part of the twin-arginine translocation (Tat) system that transports large folded proteins containing a characteristic twin-arginine motif in their signal peptide across membranes. The sequence is that of Sec-independent protein translocase protein TatC from Halalkalibacterium halodurans (strain ATCC BAA-125 / DSM 18197 / FERM 7344 / JCM 9153 / C-125) (Bacillus halodurans).